Here is a 112-residue protein sequence, read N- to C-terminus: Large ribosomal subunit protein bL17 (112 aa).

Belongs to the bacterial ribosomal protein bL17 family. As to quaternary structure, part of the 50S ribosomal subunit. Contacts protein L32.

This Carboxydothermus hydrogenoformans (strain ATCC BAA-161 / DSM 6008 / Z-2901) protein is Large ribosomal subunit protein bL17.